The following is a 146-amino-acid chain: VKWTDKERAVILGIFSGLDYEDIGPKALVRCLIVYPWTQRYFGTFGNLSTPAAISGNPKIAAHGVKVLHGLDMALQHMDNIMETYADLSILHSETLHVDPDNFKLLADCLTITIAAKMGHCFTPDTQIAFHKFLAVVVSALGKQYC.

Residues 2–146 enclose the Globin domain; the sequence is KWTDKERAVI…VVSALGKQYC (145 aa). His-63 and His-92 together coordinate heme b.

Belongs to the globin family. As to quaternary structure, heterotetramer of two alpha chains and two beta chains. As to expression, red blood cells.

Involved in oxygen transport from gills to the various peripheral tissues. This is Hemoglobin subunit beta-1 from Lycodes reticulatus (Arctic eelpout).